A 310-amino-acid polypeptide reads, in one-letter code: Putative S-adenosyl-L-methionine-dependent methyltransferase Mb0151 (310 aa).

S-adenosyl-L-methionine contacts are provided by residues Asp132 and 161–162; that span reads DL.

It belongs to the UPF0677 family.

Its function is as follows. Exhibits S-adenosyl-L-methionine-dependent methyltransferase activity. The sequence is that of Putative S-adenosyl-L-methionine-dependent methyltransferase Mb0151 from Mycobacterium bovis (strain ATCC BAA-935 / AF2122/97).